The primary structure comprises 272 residues: Indole-3-glycerol phosphate synthase (272 aa).

Belongs to the TrpC family.

The catalysed reaction is 1-(2-carboxyphenylamino)-1-deoxy-D-ribulose 5-phosphate + H(+) = (1S,2R)-1-C-(indol-3-yl)glycerol 3-phosphate + CO2 + H2O. It participates in amino-acid biosynthesis; L-tryptophan biosynthesis; L-tryptophan from chorismate: step 4/5. The chain is Indole-3-glycerol phosphate synthase from Mycolicibacterium paratuberculosis (strain ATCC BAA-968 / K-10) (Mycobacterium paratuberculosis).